A 422-amino-acid polypeptide reads, in one-letter code: Transcription termination factor Rho (422 aa).

The Rho RNA-BD domain occupies 52 to 127 (EVGGDGVLEV…TRVTKINFDD (76 aa)). ATP is bound by residues 173 to 178 (GKGQRG), 185 to 190 (RTGKTV), and Arg-216.

Belongs to the Rho family. Homohexamer. The homohexamer assembles into an open ring structure.

In terms of biological role, facilitates transcription termination by a mechanism that involves Rho binding to the nascent RNA, activation of Rho's RNA-dependent ATPase activity, and release of the mRNA from the DNA template. The protein is Transcription termination factor Rho of Cereibacter sphaeroides (strain ATCC 17023 / DSM 158 / JCM 6121 / CCUG 31486 / LMG 2827 / NBRC 12203 / NCIMB 8253 / ATH 2.4.1.) (Rhodobacter sphaeroides).